The primary structure comprises 234 residues: ATP-dependent dethiobiotin synthetase BioD (234 aa).

14-19 (GVGKTI) lines the ATP pocket. Threonine 18 contributes to the Mg(2+) binding site. Lysine 39 is an active-site residue. Position 43 (serine 43) interacts with substrate. Residues aspartate 56, 118–121 (EGAG), 178–179 (NH), and 208–210 (PWL) each bind ATP. Mg(2+) contacts are provided by aspartate 56 and glutamate 118.

This sequence belongs to the dethiobiotin synthetase family. In terms of assembly, homodimer. It depends on Mg(2+) as a cofactor.

It is found in the cytoplasm. It carries out the reaction (7R,8S)-7,8-diammoniononanoate + CO2 + ATP = (4R,5S)-dethiobiotin + ADP + phosphate + 3 H(+). It functions in the pathway cofactor biosynthesis; biotin biosynthesis; biotin from 7,8-diaminononanoate: step 1/2. Functionally, catalyzes a mechanistically unusual reaction, the ATP-dependent insertion of CO2 between the N7 and N8 nitrogen atoms of 7,8-diaminopelargonic acid (DAPA, also called 7,8-diammoniononanoate) to form a ureido ring. In Marinobacter nauticus (strain ATCC 700491 / DSM 11845 / VT8) (Marinobacter aquaeolei), this protein is ATP-dependent dethiobiotin synthetase BioD.